A 70-amino-acid polypeptide reads, in one-letter code: Acyl carrier protein (70 aa).

The 69-residue stretch at 2–70 (SDIADRVKKI…ETIQTFGDAP (69 aa)) folds into the Carrier domain. Position 37 is an O-(pantetheine 4'-phosphoryl)serine (Ser37).

It belongs to the acyl carrier protein (ACP) family. 4'-phosphopantetheine is transferred from CoA to a specific serine of apo-ACP by AcpS. This modification is essential for activity because fatty acids are bound in thioester linkage to the sulfhydryl of the prosthetic group.

Its subcellular location is the cytoplasm. Its pathway is lipid metabolism; fatty acid biosynthesis. Its function is as follows. Carrier of the growing fatty acid chain in fatty acid biosynthesis. The polypeptide is Acyl carrier protein (Cereibacter sphaeroides (Rhodobacter sphaeroides)).